We begin with the raw amino-acid sequence, 457 residues long: tRNA modification GTPase MnmE (457 aa).

3 residues coordinate (6S)-5-formyl-5,6,7,8-tetrahydrofolate: Arg-25, Glu-87, and Arg-126. A TrmE-type G domain is found at 223–377; the sequence is GISTAIIGRP…IEERINQLFF (155 aa). Residue Asn-233 coordinates K(+). Residues 233 to 238, 252 to 258, and 277 to 280 each bind GTP; these read NVGKSS, TDIEGTT, and DTAG. A Mg(2+)-binding site is contributed by Ser-237. Positions 252, 254, and 257 each coordinate K(+). Thr-258 lines the Mg(2+) pocket. Lys-457 contacts (6S)-5-formyl-5,6,7,8-tetrahydrofolate.

Belongs to the TRAFAC class TrmE-Era-EngA-EngB-Septin-like GTPase superfamily. TrmE GTPase family. Homodimer. Heterotetramer of two MnmE and two MnmG subunits. It depends on K(+) as a cofactor.

The protein resides in the cytoplasm. Functionally, exhibits a very high intrinsic GTPase hydrolysis rate. Involved in the addition of a carboxymethylaminomethyl (cmnm) group at the wobble position (U34) of certain tRNAs, forming tRNA-cmnm(5)s(2)U34. The polypeptide is tRNA modification GTPase MnmE (Streptococcus sanguinis (strain SK36)).